The sequence spans 240 residues: tRNA (guanine-N(1)-)-methyltransferase (240 aa).

S-adenosyl-L-methionine-binding positions include G110 and 129 to 134; that span reads LGDFVL.

The protein belongs to the RNA methyltransferase TrmD family. Homodimer.

The protein localises to the cytoplasm. It carries out the reaction guanosine(37) in tRNA + S-adenosyl-L-methionine = N(1)-methylguanosine(37) in tRNA + S-adenosyl-L-homocysteine + H(+). In terms of biological role, specifically methylates guanosine-37 in various tRNAs. This is tRNA (guanine-N(1)-)-methyltransferase from Clostridium botulinum (strain Loch Maree / Type A3).